Consider the following 196-residue polypeptide: Endonuclease V (196 aa).

Asp37 and Asp98 together coordinate Mg(2+).

Belongs to the endonuclease V family. Mg(2+) serves as cofactor.

It localises to the cytoplasm. The enzyme catalyses Endonucleolytic cleavage at apurinic or apyrimidinic sites to products with a 5'-phosphate.. Functionally, DNA repair enzyme involved in the repair of deaminated bases. Selectively cleaves double-stranded DNA at the second phosphodiester bond 3' to a deoxyinosine leaving behind the intact lesion on the nicked DNA. This is Endonuclease V from Sulfolobus acidocaldarius (strain ATCC 33909 / DSM 639 / JCM 8929 / NBRC 15157 / NCIMB 11770).